The following is a 133-amino-acid chain: Phosphoribosyl-AMP cyclohydrolase (133 aa).

D82 contacts Mg(2+). Residue C83 participates in Zn(2+) binding. The Mg(2+) site is built by D84 and D86. Zn(2+)-binding residues include C100 and C107.

This sequence belongs to the PRA-CH family. In terms of assembly, homodimer. Mg(2+) serves as cofactor. Zn(2+) is required as a cofactor.

Its subcellular location is the cytoplasm. It catalyses the reaction 1-(5-phospho-beta-D-ribosyl)-5'-AMP + H2O = 1-(5-phospho-beta-D-ribosyl)-5-[(5-phospho-beta-D-ribosylamino)methylideneamino]imidazole-4-carboxamide. Its pathway is amino-acid biosynthesis; L-histidine biosynthesis; L-histidine from 5-phospho-alpha-D-ribose 1-diphosphate: step 3/9. Catalyzes the hydrolysis of the adenine ring of phosphoribosyl-AMP. In Aromatoleum aromaticum (strain DSM 19018 / LMG 30748 / EbN1) (Azoarcus sp. (strain EbN1)), this protein is Phosphoribosyl-AMP cyclohydrolase.